The sequence spans 291 residues: Gamma-sarcoglycan (291 aa).

Over 1–37 (MVREQYTTATEGICIERPENQYVYKIGIYGWRKRCLY) the chain is Cytoplasmic. The chain crosses the membrane as a helical; Signal-anchor for type II membrane protein span at residues 38-58 (LFVLLLLIILVVNLALTIWIL). Topologically, residues 59 to 291 (KVMWFSPAGM…TCQEHNHICL (233 aa)) are extracellular. N-linked (GlcNAc...) asparagine glycosylation occurs at N110. Cystine bridges form between C265/C290 and C267/C283.

It belongs to the sarcoglycan beta/delta/gamma/zeta family. In terms of assembly, interacts with the syntrophin SNTA1. Cross-link to form 2 major subcomplexes: one consisting of SGCB, SGCD and SGCG and the other consisting of SGCB and SGCD. The association between SGCB and SGCG is particularly strong while SGCA is loosely associated with the other sarcoglycans. Interacts with FLNC. Expressed in skeletal and heart muscle.

It localises to the cell membrane. Its subcellular location is the sarcolemma. The protein localises to the cytoplasm. The protein resides in the cytoskeleton. Functionally, component of the sarcoglycan complex, a subcomplex of the dystrophin-glycoprotein complex which forms a link between the F-actin cytoskeleton and the extracellular matrix. This chain is Gamma-sarcoglycan (SGCG), found in Homo sapiens (Human).